The following is a 356-amino-acid chain: ATP-dependent 6-phosphofructokinase (356 aa).

ATP-binding positions include Gly15, 78 to 79 (KG), and 115 to 118 (GEGT). Glu116 contributes to the Mg(2+) binding site. Residues 138–140 (TID), Arg175, 182–184 (MGR), Glu235, Arg272, and 278–281 (HLQR) contribute to the substrate site. The active-site Proton acceptor is Asp140.

Belongs to the phosphofructokinase type A (PFKA) family. Mixed-substrate PFK group III subfamily. As to quaternary structure, homodimer or homotetramer. Mg(2+) is required as a cofactor.

It is found in the cytoplasm. It catalyses the reaction beta-D-fructose 6-phosphate + ATP = beta-D-fructose 1,6-bisphosphate + ADP + H(+). It participates in carbohydrate degradation; glycolysis; D-glyceraldehyde 3-phosphate and glycerone phosphate from D-glucose: step 3/4. Functionally, catalyzes the phosphorylation of D-fructose 6-phosphate to fructose 1,6-bisphosphate by ATP, the first committing step of glycolysis. This Chloroflexus aurantiacus (strain ATCC 29366 / DSM 635 / J-10-fl) protein is ATP-dependent 6-phosphofructokinase.